A 653-amino-acid chain; its full sequence is Sodium-dependent nutrient amino acid transporter 1 (653 aa).

Positions 1-55 (MELKGVHQQNGTSNGTGAAGTEGESPPPAPAPATAEAAASLETTTEKVDAEQQKT) are disordered. Residues 1 to 59 (MELKGVHQQNGTSNGTGAAGTEGESPPPAPAPATAEAAASLETTTEKVDAEQQKTERTN) lie on the Cytoplasmic side of the membrane. Low complexity-rich tracts occupy residues 10–24 (NGTS…TEGE) and 32–43 (PATAEAAASLET). The segment covering 44–55 (TTEKVDAEQQKT) has biased composition (basic and acidic residues). 4 helical membrane passes run 60 to 80 (WGNG…LGNV), 93 to 113 (GAFL…MYYL), 125 to 145 (TVKI…QAFA), and 146 to 166 (TICI…YLFV). Residues asparagine 202 and asparagine 205 are each glycosylated (N-linked (GlcNAc...) asparagine). A run of 9 helical transmembrane segments spans residues 241 to 261 (PDWK…LVIM), 270 to 290 (AAYF…VRAV), 319 to 339 (AVVQ…MFAS), 353 to 373 (IVTT…FAIL), 413 to 433 (LFSV…IVAL), 459 to 479 (ICGF…ILTL), 486 to 506 (TYVV…IYGM), 528 to 548 (CWSF…MVTI), and 565 to 585 (AGWL…MWYI).

The protein belongs to the sodium:neurotransmitter symporter (SNF) (TC 2.A.22) family.

It localises to the membrane. Its function is as follows. Unusual broad substrate spectrum amino acid:sodium cotransporter that promotes absorption of the D isomers of essential amino acids. Neutral amino acids are the preferred substrates, especially methionine and phenylalanine. In Drosophila pseudoobscura pseudoobscura (Fruit fly), this protein is Sodium-dependent nutrient amino acid transporter 1.